The following is a 236-amino-acid chain: Small ribosomal subunit protein uS5 (236 aa).

Over residues 1–10 (MTENNEKDIQ) the composition is skewed to basic and acidic residues. Residues 1–64 (MTENNEKDIQ…GRDGGREAEK (64 aa)) form a disordered region. The span at 11–27 (VTEAVAAPATETAAPAT) shows a compositional bias: low complexity. Residues 28-64 (TDDRRGGARRGERGDRGQGRGDRGGRGGRDGGREAEK) are compositionally biased toward basic and acidic residues. The S5 DRBM domain maps to 67-130 (FVERVVTINR…EEAKKSFFRV (64 aa)).

This sequence belongs to the universal ribosomal protein uS5 family. As to quaternary structure, part of the 30S ribosomal subunit. Contacts proteins S4 and S8.

With S4 and S12 plays an important role in translational accuracy. Its function is as follows. Located at the back of the 30S subunit body where it stabilizes the conformation of the head with respect to the body. The protein is Small ribosomal subunit protein uS5 of Arthrobacter sp. (strain FB24).